Here is a 654-residue protein sequence, read N- to C-terminus: Insulin receptor substrate 1 (654 aa).

A PH domain is found at 3–107 (DIKKCGYLRK…WYQAILEVQA (105 aa)). The residue at position 36 (Y36) is a Phosphotyrosine. Positions 126 to 230 (FREVWQVSVR…EAMKSLSEEF (105 aa)) constitute an IRS-type PTB domain. The interval 228 to 329 (EEFRPRTKSQ…EYGSSPGVLE (102 aa)) is disordered. Over residues 235–245 (KSQSLSSTPIS) the composition is skewed to polar residues. The residue at position 276 (S276) is a Phosphoserine. The segment covering 307-321 (NESSADYGSASSDEY) has biased composition (polar residues). Y345 bears the Phosphotyrosine; by INSR mark. 6 short sequence motifs (YXXM motif) span residues 345 to 348 (YISM), 384 to 387 (YAMM), 398 to 401 (YMPM), 411 to 414 (YMPM), 430 to 433 (YVMM), and 466 to 469 (YMNM). Phosphotyrosine; by INSR is present on residues Y398 and Y411. A Phosphotyrosine modification is found at Y430. Disordered stretches follow at residues 473–494 (SRSA…GGPC) and 507–532 (YKME…VNAG). Residues 514 to 524 (SARASCSSSSD) are compositionally biased toward low complexity. Y563 carries the post-translational modification Phosphotyrosine; by INSR.

As to quaternary structure, interacts with the NPXY motif of tyrosine-phosphorylated igf1r and insr via the PTB domain. Binds to phosphatidylinositol 3-kinase p85 subunit via the phosphorylated YXXM motifs.

Functionally, may mediate the control of various cellular processes by insulin. When phosphorylated by the insulin receptor binds specifically to various cellular proteins containing SH2 domains such as phosphatidylinositol 3-kinase p85 subunit or grb2. Activates phosphatidylinositol 3-kinase when bound to the regulatory p85 subunit. The sequence is that of Insulin receptor substrate 1 from Xenopus tropicalis (Western clawed frog).